The sequence spans 803 residues: Sensor histidine kinase CheAY (803 aa).

Residue histidine 47 is modified to Phosphohistidine. Disordered stretches follow at residues 134 to 185 (LESA…DEPD) and 209 to 255 (EADK…ENKA). Composition is skewed to basic and acidic residues over residues 136 to 166 (SAKERTTEAPQKENKEETKEEAKEENKENKA), 209 to 226 (EADKERRAQKKQEAKPKQ), and 233 to 254 (ETPKAPKTETKAKAKADTEENK). The region spanning 270-517 (RLDHLMNLIG…TQKLKIPLTL (248 aa)) is the Histidine kinase domain. Histidine 273 is modified (phosphohistidine; by autocatalysis). One can recognise a CheW-like domain in the interval 519–653 (IIQALLVGVQ…VGAMMDMAKS (135 aa)). The region spanning 678–796 (IVLAIDDSST…YLTTVVKRSI (119 aa)) is the Response regulatory domain. Aspartate 729 carries the 4-aspartylphosphate modification.

Autophosphorylated.

The enzyme catalyses ATP + protein L-histidine = ADP + protein N-phospho-L-histidine.. Functionally, member of the two-component regulatory system CheAY/CheY that regulates chemotaxis and colonization of the gastric mucosa. Functions as a sensor protein kinase which is autophosphorylated at a histidine residue and transfers its phosphate group to the conserved aspartic acid residue in the regulatory domain of CheY. In turn, phosphorylated CheY (CheY-P) interacts with the flagellar motor protein FliM to cause clockwise flagellar rotation and bacterial reversals, as opposed to straight swimming when CheY is not phosphorylated. This chain is Sensor histidine kinase CheAY (cheAY), found in Helicobacter pylori (strain ATCC 700392 / 26695) (Campylobacter pylori).